A 662-amino-acid polypeptide reads, in one-letter code: Junctophilin-1 (662 aa).

At 1 to 640 (MTGGRFDFDD…EREANSGPNS (640 aa)) the chain is on the cytoplasmic side. 5 MORN repeats span residues 14-36 (YCGG…KGQG), 38-59 (YSGS…SGNT), 60-82 (YQGY…KWMY), 106-128 (YEGT…DGGT), and 129-151 (YQGQ…PYGM). Ser-157, Ser-216, and Ser-220 each carry phosphoserine. Positions 228–247 (SKSSISSKRSSVRSDAAMSR) are disordered. MORN repeat units lie at residues 281–303 (YMGE…NGMK) and 304–326 (YEGE…DGSK). Over residues 432-443 (VDAKENPEEKVP) the composition is skewed to basic and acidic residues. Residues 432-634 (VDAKENPEEK…DSCPSMEREA (203 aa)) form a disordered region. Thr-448 carries the post-translational modification Phosphothreonine. Residue Ser-452 is modified to Phosphoserine. Position 461 is a phosphothreonine (Thr-461). Residues Ser-465, Ser-469, and Ser-475 each carry the phosphoserine modification. Residues 584–599 (KPSPNKWSPPKSVTKP) are compositionally biased toward low complexity. The segment covering 600 to 614 (VAKESKAEPKAKKSE) has biased composition (basic and acidic residues). Residues 641 to 661 (VMIVLVMLLNIGLAILFVHFL) form a helical; Anchor for type IV membrane protein membrane-spanning segment.

The protein belongs to the junctophilin family.

It is found in the cell membrane. It localises to the endoplasmic reticulum membrane. The protein resides in the sarcoplasmic reticulum membrane. Functionally, junctophilins contribute to the formation of junctional membrane complexes (JMCs) which link the plasma membrane with the endoplasmic or sarcoplasmic reticulum in excitable cells. Provides a structural foundation for functional cross-talk between the cell surface and intracellular calcium release channels. JPH1 contributes to the construction of the skeletal muscle triad by linking the t-tubule (transverse-tubule) and SR (sarcoplasmic reticulum) membranes. This chain is Junctophilin-1 (JPH1), found in Oryctolagus cuniculus (Rabbit).